The chain runs to 325 residues: Tetraacyldisaccharide 4'-kinase (325 aa).

Thr-55 to Thr-62 contacts ATP.

It belongs to the LpxK family.

The enzyme catalyses a lipid A disaccharide + ATP = a lipid IVA + ADP + H(+). It participates in glycolipid biosynthesis; lipid IV(A) biosynthesis; lipid IV(A) from (3R)-3-hydroxytetradecanoyl-[acyl-carrier-protein] and UDP-N-acetyl-alpha-D-glucosamine: step 6/6. Functionally, transfers the gamma-phosphate of ATP to the 4'-position of a tetraacyldisaccharide 1-phosphate intermediate (termed DS-1-P) to form tetraacyldisaccharide 1,4'-bis-phosphate (lipid IVA). The chain is Tetraacyldisaccharide 4'-kinase from Salmonella dublin (strain CT_02021853).